Here is a 305-residue protein sequence, read N- to C-terminus: Glycine--tRNA ligase alpha subunit (305 aa).

The protein belongs to the class-II aminoacyl-tRNA synthetase family. As to quaternary structure, tetramer of two alpha and two beta subunits.

It is found in the cytoplasm. It catalyses the reaction tRNA(Gly) + glycine + ATP = glycyl-tRNA(Gly) + AMP + diphosphate. The protein is Glycine--tRNA ligase alpha subunit of Vibrio campbellii (strain ATCC BAA-1116).